Here is a 587-residue protein sequence, read N- to C-terminus: MTPTQNEIHPKHSYSPIRKDGLEVPETEIRLDDSPSGPNEPFRIYRTRGPETNPKQGLPRLRESWITARGDVATYQGRERLLIDDGRSAMRRGQASAEWKGQKPAPLKALPGKRVTQMAYARAGVITREMEFVALREHVDAEFVRSEVARGRAIIPNNVNHPESEPMIIGRKFLTKINANIGNSAVTSSIEEEVSKLQWATRWGADTVMDLSTGDDIHTTREWIIRNSPVPIGTVPIYQALEKVNGVAADLNWEVFRDTIIEQCEQGVDYMTIHAGVLLAYIPLTTRRVTGIVSRGGSIMAGWCLAHHRESFLYEHFDELCEIFAQYDVAFSLGDGLRPGSLADANDAAQFAELKTIGELTQRAWEYDVQVMVEGPGHVPLNMIQENNELEQKWAADAPFYTLGPLVTDIAPGYDHITSAIGAAHIAMGGTAMLCYVTPKEHLGLPNRDDVKTGVITYKLAAHAADVAKGHPGARAWDDAMSKARFEFRWNDQFALSLDPDTAIAYHDETLPAEPAKTAHFCSMCGPKFCSMRISQDIRDMFGDQIAELGMPGVGDSSSAVASSGAREGMAEKSREFIAGGAEVYRR.

Residues 1–58 form a disordered region; sequence MTPTQNEIHPKHSYSPIRKDGLEVPETEIRLDDSPSGPNEPFRIYRTRGPETNPKQGL. Over residues 17–33 the composition is skewed to basic and acidic residues; it reads IRKDGLEVPETEIRLDD. Substrate is bound by residues N180, M209, Y238, H274, 294–296, 335–338, and E374; these read SRG and DGLR. H378 provides a ligand contact to Zn(2+). Y401 is a binding site for substrate. H442 serves as a coordination point for Zn(2+). [4Fe-4S] cluster-binding residues include C522, C525, and C530.

It belongs to the ThiC family. Requires [4Fe-4S] cluster as cofactor.

The enzyme catalyses 5-amino-1-(5-phospho-beta-D-ribosyl)imidazole + S-adenosyl-L-methionine = 4-amino-2-methyl-5-(phosphooxymethyl)pyrimidine + CO + 5'-deoxyadenosine + formate + L-methionine + 3 H(+). Its pathway is cofactor biosynthesis; thiamine diphosphate biosynthesis. Its function is as follows. Catalyzes the synthesis of the hydroxymethylpyrimidine phosphate (HMP-P) moiety of thiamine from aminoimidazole ribotide (AIR) in a radical S-adenosyl-L-methionine (SAM)-dependent reaction. The sequence is that of Phosphomethylpyrimidine synthase from Corynebacterium glutamicum (strain ATCC 13032 / DSM 20300 / JCM 1318 / BCRC 11384 / CCUG 27702 / LMG 3730 / NBRC 12168 / NCIMB 10025 / NRRL B-2784 / 534).